The chain runs to 193 residues: Thymidine kinase (193 aa).

ATP contacts are provided by residues 14–21 and 87–90; these read GCMFSGKT and DELH. E88 acts as the Proton acceptor in catalysis. Zn(2+) is bound by residues C147, C150, C185, and C188.

This sequence belongs to the thymidine kinase family. In terms of assembly, homotetramer.

It is found in the cytoplasm. It catalyses the reaction thymidine + ATP = dTMP + ADP + H(+). The polypeptide is Thymidine kinase (Roseiflexus sp. (strain RS-1)).